Consider the following 452-residue polypeptide: Phosphoglucosamine mutase (452 aa).

Serine 103 (phosphoserine intermediate) is an active-site residue. Mg(2+)-binding residues include serine 103, aspartate 243, aspartate 245, and aspartate 247. Serine 103 is subject to Phosphoserine.

It belongs to the phosphohexose mutase family. Requires Mg(2+) as cofactor. In terms of processing, activated by phosphorylation.

The catalysed reaction is alpha-D-glucosamine 1-phosphate = D-glucosamine 6-phosphate. Catalyzes the conversion of glucosamine-6-phosphate to glucosamine-1-phosphate. This chain is Phosphoglucosamine mutase, found in Lactobacillus acidophilus (strain ATCC 700396 / NCK56 / N2 / NCFM).